Consider the following 98-residue polypeptide: Keratin, high sulfur matrix protein, IIIB3 (98 aa).

A1 bears the N-acetylalanine mark.

It belongs to the KRTAP type 3 family. In terms of assembly, interacts with wool keratins. As to expression, wool.

In terms of biological role, in the wool cortex, wool keratin intermediate filaments are embedded in an interfilamentous matrix, consisting of hair keratin-associated proteins (KRTAP), which are essential for the formation of a rigid and resistant wool shaft through their extensive disulfide bond cross-linking with abundant cysteine residues of wool keratins. The matrix proteins include the high-sulfur and high-glycine-tyrosine keratins. In Ovis aries (Sheep), this protein is Keratin, high sulfur matrix protein, IIIB3.